Reading from the N-terminus, the 195-residue chain is Thymidine kinase (195 aa).

ATP-binding positions include 9–16 and 87–90; these read STMNAGKS and DEAQ. The active-site Proton acceptor is the glutamate 88. Zn(2+) contacts are provided by cysteine 145, cysteine 147, cysteine 182, and histidine 185.

The protein belongs to the thymidine kinase family. As to quaternary structure, homotetramer.

The protein localises to the cytoplasm. It carries out the reaction thymidine + ATP = dTMP + ADP + H(+). The sequence is that of Thymidine kinase from Mannheimia succiniciproducens (strain KCTC 0769BP / MBEL55E).